The sequence spans 507 residues: Probable DNA ligase (507 aa).

Glutamate 209 is an ATP binding site. Lysine 211 acts as the N6-AMP-lysine intermediate in catalysis. The ATP site is built by arginine 216, arginine 231, glutamate 260, phenylalanine 300, arginine 372, and lysine 378.

This sequence belongs to the ATP-dependent DNA ligase family. Mg(2+) is required as a cofactor.

It catalyses the reaction ATP + (deoxyribonucleotide)n-3'-hydroxyl + 5'-phospho-(deoxyribonucleotide)m = (deoxyribonucleotide)n+m + AMP + diphosphate.. In terms of biological role, DNA ligase that seals nicks in double-stranded DNA during DNA replication, DNA recombination and DNA repair. The protein is Probable DNA ligase of Mycobacterium bovis (strain ATCC BAA-935 / AF2122/97).